We begin with the raw amino-acid sequence, 492 residues long: MDPYKYRPSSANNSPFWTTNSGAPVWNNNSSMTVGTRGPILLEDYHLVEKLANFDRERIPERVVHARGASAKGFFEVTHDITHLTCADFLRAPGVQTPVIVRFSTVIHERGSPETLRDPRGFAVKFYTREGNFDLVGNNFPVFFVRDGMKFPDMVHALKPNPKSHIQENWRILDFFSHHPESLHMFSFLFDDLGVPQDYRHMEGSGVNTYMLINKAGKAHYVKFHWKPTCGVKCLLEEEAIKVGGANHSHATKDLYDSIAAGNYPEWKLFIQIIDPDHEDRFDFDPLDVTKTWPEDILPLQPVGRLVLNKNIDNFFAENEQLAFWPAIVVPGVYCSDDKLLQTRIFSYSDAQRHRLGPNYLQLPVNAPKCAHHNNHHEGFMNFMHRDEEVNYFPSRFDPCRHAEQYPIPPCVLTGKRDKCIIEKENNFKQPGERYRSWAPDRQERFICRWVDALSDPRVTHEIRSIWFSYWSQADKTLGQKIASRLNVRPTM.

Residues His-65 and Asn-138 contribute to the active site. Heme is bound at residue Tyr-348.

The protein belongs to the catalase family. As to quaternary structure, homotetramer. Heme serves as cofactor.

Its subcellular location is the peroxisome. It catalyses the reaction 2 H2O2 = O2 + 2 H2O. Functionally, occurs in almost all aerobically respiring organisms and serves to protect cells from the toxic effects of hydrogen peroxide. In Nicotiana plumbaginifolia (Leadwort-leaved tobacco), this protein is Catalase isozyme 3 (CAT3).